The primary structure comprises 346 residues: MTSRIDKTIARQREKIASGAYYEAHQQLRVIAARYIKQSNYEAAAEILAGGATALLRAGSQQGASASGGDLAIMLVDEVYTKAGWGITGGDDDAEGRARKKRLIELLREFPSEEPTRKRFIQEMIGWSGRFGPVERGDAELHHAAGSVYAEDNEPYDAEKHLVLGTSESAETLAKLEYEWYTNDEPHTAAIYASRAVFPYLLVGNLRNANKAFLVFTSRLSSSNTSLGVQEVSSASSDVRVFPSLPLLNFISMLLLTIQRGSADLFKQLTAHYASQIREVGIWDDALSQIGEQYFAIKVPRQGNPLLDMMGSMLFGGQNQGGSRRTPQGRSQSKTVEAPPASMELD.

The disordered stretch occupies residues 317–346 (GQNQGGSRRTPQGRSQSKTVEAPPASMELD). Polar residues predominate over residues 321 to 335 (GGSRRTPQGRSQSKT).

This sequence belongs to the GET4 family. Component of the get4/get5/sgt2 sorting complex.

It is found in the cytoplasm. Its function is as follows. Component of the get4/get5/sgt2 sorting complex involved in the GET (guided entry of TA proteins) pathway that leads to the insertion of tail-anchored (TA) proteins into the endoplasmic reticulum. Get4 and get5 form an obligate complex that catalyzes the transfer of tail-anchored proteins destined to the endoplasmic reticulum from sgt2 to the cytosolic targeting factor which then targets the TA protein to the ER membrane via get1/get2. This Aspergillus fumigatus (strain ATCC MYA-4609 / CBS 101355 / FGSC A1100 / Af293) (Neosartorya fumigata) protein is Golgi to ER traffic protein 4.